The primary structure comprises 1046 residues: UDP-N-acetylglucosamine--peptide N-acetylglucosaminyltransferase 110 kDa subunit (1046 aa).

The residue at position 2 (Ala-2) is an N-acetylalanine. Residues Ser-3 and Ser-4 each carry the phosphoserine; by GSK3-beta; alternate modification. O-linked (GlcNAc) serine; alternate glycans are attached at residues Ser-3 and Ser-4. Position 20 is a phosphoserine (Ser-20). TPR repeat units follow at residues 21–54, 89–122, 123–156, 157–190, 191–224, 225–258, 259–292, 293–326, 327–360, 361–394, 395–428, and 429–462; these read FQGL…EPDN, AEAY…KPDF, IDGY…NPDL, YCVR…QPNF, AVAW…DPNF, LDAY…SPNH, AVVH…QPHF, PDAY…CPTH, ADSL…FPEF, AAAH…SPTF, ADAY…NPAF, and ADAH…KPDF. Ser-399 is a glycosylation site (O-linked (GlcNAc) serine; by autocatalysis). Thr-454 carries the post-translational modification Phosphothreonine. Residues 463–473 form a TPR 13; truncated repeat; that stretch reads PDAYCNLAHCL. A DFP motif motif is present at residues 464-466; it reads DAY. The Nuclear localization signal signature appears at 487 to 503; it reads KKLVSIVAEQLEKNRLP. The active-site Proton acceptor is the His-508. Residues Gln-849, Lys-852, 906 to 908, 911 to 914, 930 to 932, and Asp-935 each bind UDP; these read APK, HVRR, and HTT. Tyr-989 is modified (phosphotyrosine). A required for phosphatidylinositol 3,4,5-triphosphate binding region spans residues 991–1010; that stretch reads KKIRGKVWKQRISSPLFNTK.

Belongs to the glycosyltransferase 41 family. O-GlcNAc transferase subfamily. As to quaternary structure, monomer; may exist in different oligomerization states in cells. Homotrimer, oligomerizes via TPR repeats 6 and 7. Trimerization is not necessary for activity in vitro, however it increases affinity for UDP-GlcNAc. Component of a THAP1/THAP3-HCFC1-OGT complex. Component of the NSL complex at least composed of MOF/KAT8, KANSL1, KANSL2, KANSL3, MCRS1, PHF20, OGT1/OGT, WDR5 and HCFC1. Found in a complex with KIF5B, RHOT1, RHOT2 and TRAK1. Found in a complex composed of at least SINHCAF, SIN3A, HDAC1, SAP30, RBBP4, OGT and TET1. Component of a complex composed of KMT2E/MLL5, OGT and USP7; the complex stabilizes KMT2E/MLL5, preventing KMT2E/MLL5 ubiquitination and proteasomal-mediated degradation. Interacts (via TPRs 1-6) with SIN3A; the interaction mediates transcriptional repression in parallel with histone deacetylase. Interacts (via TPR 5-6) with TET1, TET2 and TET3. Interacts (via TPR repeats 6 and 7) with ATXN10. Interacts with NSD2. Interacts with PROSER1; this interaction mediates TET2 O-GlcNAcylation and stability by promoting the interaction between OGT and TET2. Post-translationally, ubiquitinated by the SCF(FBXO31) complex, leading to its proteasomal degradation. In terms of processing, phosphorylation on Ser-3 or Ser-4 by GSK3-beta positively regulates its activity. Phosphorylation at Thr-454 by AMPK promotes nuclear localization. Glycosylated via autocatalysis; O-GlcNAcylation at Ser-399 promotes nuclear localization.

The protein resides in the cytoplasm. The protein localises to the nucleus. It localises to the cell membrane. It is found in the mitochondrion membrane. Its subcellular location is the cell projection. The catalysed reaction is L-seryl-[protein] + UDP-N-acetyl-alpha-D-glucosamine = 3-O-(N-acetyl-beta-D-glucosaminyl)-L-seryl-[protein] + UDP + H(+). The enzyme catalyses L-threonyl-[protein] + UDP-N-acetyl-alpha-D-glucosamine = 3-O-(N-acetyl-beta-D-glucosaminyl)-L-threonyl-[protein] + UDP + H(+). It functions in the pathway protein modification; protein glycosylation. Subject to product inhibition by UDP. Its function is as follows. Catalyzes the transfer of a single N-acetylglucosamine from UDP-GlcNAc to a serine or threonine residue in cytoplasmic and nuclear proteins resulting in their modification with a beta-linked N-acetylglucosamine (O-GlcNAc). Glycosylates a large and diverse number of proteins including histone H2B, AKT1, AMPK, ATG4B, CAPRIN1, EZH2, FNIP1, GSDMD, KRT7, LMNA, LMNB1, LMNB2, RPTOR, HOXA1, PFKL, KMT2E/MLL5, MAPT/TAU, TET2, RBL2, RET, NOD2 and HCFC1. Can regulate their cellular processes via cross-talk between glycosylation and phosphorylation or by affecting proteolytic processing. Involved in insulin resistance in muscle and adipocyte cells via glycosylating insulin signaling components and inhibiting the 'Thr-308' phosphorylation of AKT1, enhancing IRS1 phosphorylation and attenuating insulin signaling. Involved in glycolysis regulation by mediating glycosylation of 6-phosphofructokinase PFKL, inhibiting its activity. Plays a key role in chromatin structure by mediating O-GlcNAcylation of 'Ser-112' of histone H2B: recruited to CpG-rich transcription start sites of active genes via its interaction with TET proteins (TET1, TET2 or TET3). As part of the NSL complex indirectly involved in acetylation of nucleosomal histone H4 on several lysine residues. O-GlcNAcylation of 'Ser-75' of EZH2 increases its stability, and facilitating the formation of H3K27me3 by the PRC2/EED-EZH2 complex. Stabilizes KMT2E/MLL5 by mediating its glycosylation, thereby preventing KMT2E/MLL5 ubiquitination. Regulates circadian oscillation of the clock genes and glucose homeostasis in the liver. Stabilizes clock proteins BMAL1 and CLOCK through O-glycosylation, which prevents their ubiquitination and subsequent degradation. Promotes the CLOCK-BMAL1-mediated transcription of genes in the negative loop of the circadian clock such as PER1/2 and CRY1/2. O-glycosylates HCFC1 and regulates its proteolytic processing and transcriptional activity. Component of a THAP1/THAP3-HCFC1-OGT complex that is required for the regulation of the transcriptional activity of RRM1. Regulates mitochondrial motility in neurons by mediating glycosylation of TRAK1. Promotes autophagy by mediating O-glycosylation of ATG4B. Acts as a regulator of mTORC1 signaling by mediating O-glycosylation of RPTOR and FNIP1: O-GlcNAcylation of RPTOR in response to glucose sufficiency promotes activation of the mTORC1 complex. In Mus musculus (Mouse), this protein is UDP-N-acetylglucosamine--peptide N-acetylglucosaminyltransferase 110 kDa subunit (Ogt).